A 429-amino-acid chain; its full sequence is 3-phosphoshikimate 1-carboxyvinyltransferase (429 aa).

Residues K23, S24, and R28 each coordinate 3-phosphoshikimate. K23 contributes to the phosphoenolpyruvate binding site. Phosphoenolpyruvate-binding residues include G95 and R123. Positions 168, 170, 316, and 343 each coordinate 3-phosphoshikimate. Q170 is a phosphoenolpyruvate binding site. Catalysis depends on D316, which acts as the Proton acceptor. Phosphoenolpyruvate is bound by residues R347 and R389.

This sequence belongs to the EPSP synthase family. As to quaternary structure, monomer.

It is found in the cytoplasm. It carries out the reaction 3-phosphoshikimate + phosphoenolpyruvate = 5-O-(1-carboxyvinyl)-3-phosphoshikimate + phosphate. It functions in the pathway metabolic intermediate biosynthesis; chorismate biosynthesis; chorismate from D-erythrose 4-phosphate and phosphoenolpyruvate: step 6/7. In terms of biological role, catalyzes the transfer of the enolpyruvyl moiety of phosphoenolpyruvate (PEP) to the 5-hydroxyl of shikimate-3-phosphate (S3P) to produce enolpyruvyl shikimate-3-phosphate and inorganic phosphate. This is 3-phosphoshikimate 1-carboxyvinyltransferase from Bacillus cereus (strain B4264).